Reading from the N-terminus, the 133-residue chain is Small ribosomal subunit protein uS9 (133 aa).

The disordered stretch occupies residues 102 to 133 (KPKGLLTRDPREVERKKYGLKKARRAPQFSKR). Basic and acidic residues predominate over residues 107–118 (LTRDPREVERKK). Over residues 119-133 (YGLKKARRAPQFSKR) the composition is skewed to basic residues.

The protein belongs to the universal ribosomal protein uS9 family.

This chain is Small ribosomal subunit protein uS9, found in Deinococcus deserti (strain DSM 17065 / CIP 109153 / LMG 22923 / VCD115).